A 470-amino-acid chain; its full sequence is Nuclear receptor subfamily 0 group B member 1 (470 aa).

Tandem repeats lie at residues methionine 1–cysteine 67, phenylalanine 68–cysteine 133, and phenylalanine 134–cysteine 200. The 4 X 67 AA tandem repeats stretch occupies residues methionine 1–valine 253. 3 short sequence motifs (LXXLL motif) span residues leucine 13–leucine 17, leucine 80–leucine 84, and leucine 146–leucine 150. Residues phenylalanine 201–valine 253 form a 4; truncated repeat. The 255-residue stretch at cysteine 215–lysine 469 folds into the NR LBD domain. The short motif at methionine 461–leucine 466 is the AF-2 motif element.

This sequence belongs to the nuclear hormone receptor family. NR0 subfamily. In terms of assembly, homodimer. Interacts with NR5A1, NR5A2, NR0B2 and with COPS2. Interacts with ESRRB; represses ESRRB activity at the GATA6 promoter.

Its subcellular location is the nucleus. It localises to the cytoplasm. In terms of biological role, nuclear receptor that lacks a DNA-binding domain and acts as a corepressor that inhibits the transcriptional activity of other nuclear receptors through heterodimeric interactions. Component of a cascade required for the development of the hypothalamic-pituitary-adrenal-gonadal axis. May also have a role in the development of the embryo and in the maintenance of embryonic stem cell pluripotency. The protein is Nuclear receptor subfamily 0 group B member 1 (NR0B1) of Pongo pygmaeus (Bornean orangutan).